The chain runs to 309 residues: uncharacterized protein (309 aa).

The 77-residue stretch at 11-87 (QRLDTFLATL…FPLDILYEDE (77 aa)) folds into the S4 RNA-binding domain. Residue Asp131 is part of the active site.

It belongs to the pseudouridine synthase RluA family.

It catalyses the reaction a uridine in RNA = a pseudouridine in RNA. This is an uncharacterized protein from Mycoplasma pneumoniae (strain ATCC 29342 / M129 / Subtype 1) (Mycoplasmoides pneumoniae).